The following is a 176-amino-acid chain: Replication restart protein PriC (176 aa).

Belongs to the PriC family. In terms of assembly, component of the replication restart primosome, which is composed of PriA, PriB, PriC, DnaB and DnaT; DnaG primase associates transiently with this complex. Interacts with the C-terminus of SSB; this interaction is required to load the main replicative helicase onto substrate replication forks. Interacts with helicase DnaB alone and in the DnaB-DnaC complex, probably 1:1 binding with DnaB. Interacts with DnaT.

Its function is as follows. Involved in the restart of stalled replication forks, which reloads the DnaB replicative helicase on sites other than the origin of replication. Recognizes abandoned replication forks and remodels DNA single-stranded binding protein (SSB) on ssDNA to uncover a loading site for DnaB. There are several restart pathways, the PriA-PriC pathway is a minor restart pathway. Part of the minor PriC-Rep pathway for restart of stalled replication forks, which has a different substrate specificity than PriA. Part of the major restart pathway with PriA, PriB, DnaB, DnaT and DnaG primase. priB and priC have redundant roles in the cell. Binds 7-9 nucleotides of single-stranded (ss)DNA. In Klebsiella pneumoniae subsp. pneumoniae (strain ATCC 700721 / MGH 78578), this protein is Replication restart protein PriC.